Here is a 287-residue protein sequence, read N- to C-terminus: rRNA adenine N-6-methyltransferase (287 aa).

Residues 1-13 (MKKKNHKYRGKKL) are compositionally biased toward basic residues. A disordered region spans residues 1 to 21 (MKKKNHKYRGKKLNRGESPNF). 6 residues coordinate S-adenosyl-L-methionine: His25, Met27, Gly52, Glu73, Asp98, and Asn114.

It belongs to the class I-like SAM-binding methyltransferase superfamily. rRNA adenine N(6)-methyltransferase family. Homodimer.

Its function is as follows. Involved in erythromycin resistance. The polypeptide is rRNA adenine N-6-methyltransferase (ermJ) (Bacillus anthracis).